Reading from the N-terminus, the 255-residue chain is 5'-nucleotidase SurE (255 aa).

Aspartate 7, aspartate 8, serine 38, and asparagine 90 together coordinate a divalent metal cation.

This sequence belongs to the SurE nucleotidase family. The cofactor is a divalent metal cation.

It localises to the cytoplasm. The catalysed reaction is a ribonucleoside 5'-phosphate + H2O = a ribonucleoside + phosphate. Its function is as follows. Nucleotidase that shows phosphatase activity on nucleoside 5'-monophosphates. This is 5'-nucleotidase SurE from Picrophilus torridus (strain ATCC 700027 / DSM 9790 / JCM 10055 / NBRC 100828 / KAW 2/3).